Consider the following 302-residue polypeptide: tRNA pseudouridine synthase B (302 aa).

Catalysis depends on Asp-47, which acts as the Nucleophile.

Belongs to the pseudouridine synthase TruB family. Type 1 subfamily.

The catalysed reaction is uridine(55) in tRNA = pseudouridine(55) in tRNA. Functionally, responsible for synthesis of pseudouridine from uracil-55 in the psi GC loop of transfer RNAs. This Ruegeria sp. (strain TM1040) (Silicibacter sp.) protein is tRNA pseudouridine synthase B.